Consider the following 168-residue polypeptide: 2-C-methyl-D-erythritol 2,4-cyclodiphosphate synthase (168 aa).

Residues Asp13 and His15 each coordinate a divalent metal cation. Residues 13–15 (DVH) and 39–40 (HS) contribute to the 4-CDP-2-C-methyl-D-erythritol 2-phosphate site. His47 contacts a divalent metal cation. Residues 61–63 (DIG), 66–70 (FPDTD), Phe144, and Lys147 each bind 4-CDP-2-C-methyl-D-erythritol 2-phosphate.

The protein belongs to the IspF family. In terms of assembly, homotrimer. A divalent metal cation serves as cofactor.

The enzyme catalyses 4-CDP-2-C-methyl-D-erythritol 2-phosphate = 2-C-methyl-D-erythritol 2,4-cyclic diphosphate + CMP. The protein operates within isoprenoid biosynthesis; isopentenyl diphosphate biosynthesis via DXP pathway; isopentenyl diphosphate from 1-deoxy-D-xylulose 5-phosphate: step 4/6. Involved in the biosynthesis of isopentenyl diphosphate (IPP) and dimethylallyl diphosphate (DMAPP), two major building blocks of isoprenoid compounds. Catalyzes the conversion of 4-diphosphocytidyl-2-C-methyl-D-erythritol 2-phosphate (CDP-ME2P) to 2-C-methyl-D-erythritol 2,4-cyclodiphosphate (ME-CPP) with a corresponding release of cytidine 5-monophosphate (CMP). In Ralstonia pickettii (strain 12J), this protein is 2-C-methyl-D-erythritol 2,4-cyclodiphosphate synthase.